Reading from the N-terminus, the 64-residue chain is Large ribosomal subunit protein bL32 (64 aa).

The disordered stretch occupies residues M1–E64. Positions R7 to R16 are enriched in basic residues.

Belongs to the bacterial ribosomal protein bL32 family.

In Methylococcus capsulatus (strain ATCC 33009 / NCIMB 11132 / Bath), this protein is Large ribosomal subunit protein bL32.